The following is a 211-amino-acid chain: Arginine exporter protein ArgO (211 aa).

A run of 6 helical transmembrane segments spans residues 1–21 (MISYYFQGFALGAAMILPLGP), 37–57 (LMIALLCALSDLVLISAGIFG), 68–88 (LLALVTWGGVAFLLWYGFGAL), 111–131 (IIATMLAVTWLNPHVYLDTFV), 147–167 (WFALGTISASFLWFFGLALLA), and 179–199 (AQRIINILVGVVMWLIAFQLA).

Belongs to the LysE/ArgO transporter (TC 2.A.75) family.

Its subcellular location is the cell inner membrane. It carries out the reaction L-arginine(in) = L-arginine(out). Its function is as follows. Involved in the export of arginine. Important to control the intracellular level of arginine and the correct balance between arginine and lysine. The sequence is that of Arginine exporter protein ArgO from Salmonella choleraesuis (strain SC-B67).